The chain runs to 210 residues: Large ribosomal subunit protein uL3 (210 aa).

Positions 136-156 (THGTEKAHRSGGSIGNNTEPG) are disordered.

The protein belongs to the universal ribosomal protein uL3 family. In terms of assembly, part of the 50S ribosomal subunit. Forms a cluster with proteins L14 and L19.

Its function is as follows. One of the primary rRNA binding proteins, it binds directly near the 3'-end of the 23S rRNA, where it nucleates assembly of the 50S subunit. This chain is Large ribosomal subunit protein uL3, found in Solidesulfovibrio magneticus (strain ATCC 700980 / DSM 13731 / RS-1) (Desulfovibrio magneticus).